The following is a 148-amino-acid chain: Large ribosomal subunit protein bL9 (148 aa).

The protein belongs to the bacterial ribosomal protein bL9 family.

In terms of biological role, binds to the 23S rRNA. This Salinispora tropica (strain ATCC BAA-916 / DSM 44818 / JCM 13857 / NBRC 105044 / CNB-440) protein is Large ribosomal subunit protein bL9.